Consider the following 246-residue polypeptide: MVTANLRFVVKVAYEYRSYGIKMSDLIQEGNIGLMKAVQKFDPDKGIRLISYAVWWIRAYIQNYILKSWSLVKLGTTQAHGKLFFSLARTRRELEKFGSGDAAVNVDDIARRLHVKPGEVREMEQRMGGRDLSLDAPMGEDGGNSHVDFVVSAAAPQDDEFADKEEAGLINARVRAALMRLDPREPFIIEQRVMNERPMTLKELGEHFGFSRERARQLEIRAKDKLKSELAALMAEVDPEAVAAQQ.

Positions 25 to 38 match the Polymerase core binding motif; that stretch reads DLIQEGNIGLMKAV. The segment at residues 201–220 is a DNA-binding region (H-T-H motif); it reads LKELGEHFGFSRERARQLEI.

Belongs to the sigma-70 factor family.

Functionally, sigma factors are initiation factors that promote the attachment of RNA polymerase to specific initiation sites and are then released. This sigma factor is essential for late-stage differentiation of M.xanthus. This Myxococcus xanthus protein is RNA polymerase sigma-B factor (sigB).